The chain runs to 199 residues: Protein shisa-like-1 (199 aa).

The N-terminal stretch at 1-25 (MTSCGQQSLNVLAVLFSLLFSAVLS) is a signal peptide. Residues 26–97 (AHFRVCEPYT…SEGYMHNNYT (72 aa)) lie on the Extracellular side of the membrane. N-linked (GlcNAc...) asparagine glycans are attached at residues Asn53 and Asn95. Residues 98–118 (ALLGVWIYGFFVLMLLVLDLL) form a helical membrane-spanning segment. Residues 119–199 (YYSAMNYDIC…PLMTFQSSSA (81 aa)) are Cytoplasmic-facing. Residues 146-199 (PRRWGNPARAPRPGQRAPQPQPPPGPLPQAPQAVHTLRGDAHSPPLMTFQSSSA) form a disordered region. Residues 152–163 (PARAPRPGQRAP) are compositionally biased toward low complexity. Residues 164 to 174 (QPQPPPGPLPQ) show a composition bias toward pro residues.

It belongs to the shisa family.

The protein localises to the membrane. This Homo sapiens (Human) protein is Protein shisa-like-1.